The sequence spans 38 residues: Large ribosomal subunit protein bL36 (38 aa).

This sequence belongs to the bacterial ribosomal protein bL36 family.

The polypeptide is Large ribosomal subunit protein bL36 (Pseudothermotoga lettingae (strain ATCC BAA-301 / DSM 14385 / NBRC 107922 / TMO) (Thermotoga lettingae)).